Reading from the N-terminus, the 637-residue chain is tRNA uridine 5-carboxymethylaminomethyl modification enzyme MnmG (637 aa).

14–19 (GAGHAG) contacts FAD. 279 to 293 (GPRYCPSIEDKVVRF) is a binding site for NAD(+).

The protein belongs to the MnmG family. As to quaternary structure, homodimer. Heterotetramer of two MnmE and two MnmG subunits. FAD serves as cofactor.

The protein localises to the cytoplasm. In terms of biological role, NAD-binding protein involved in the addition of a carboxymethylaminomethyl (cmnm) group at the wobble position (U34) of certain tRNAs, forming tRNA-cmnm(5)s(2)U34. The polypeptide is tRNA uridine 5-carboxymethylaminomethyl modification enzyme MnmG (Desulfitobacterium hafniense (strain Y51)).